Consider the following 445-residue polypeptide: MSHSDHTAPLEARLSAALSGTARVPGDKSISHRALILGALAVGETRISGLLEGEDVLNTARAMRALGAQVERTGDCAWSVHGVGVAGFAPPAAPLDFGNSGTGCRLAMGAVAGSPIIATFDGDASLRSRPMRRIVDPLEQMGARVTQSADGGRLPLTLQGARDPLPITYRTPVPSAQIKSAVLLAGLSAPGVTTVIEAEASRDHTELMLQHFGATVVTEPEGPHGRKISLTGQPELRGAPVVVPADPSSAAFPMVAALIVPGSDVVLTEVMTNPLRTGLITTLREMGGLIEESETRGDAGEPMARFRIRGSQLRGVEVPPERAPSMIDEYLVLAVAAAFAEGTTIMRGLHELRVKESDRLEATAAMLRVNGVTVEISGDDLIVEGKGHVPGGGLVATHMDHRIAMSALVMGLAADKPVRVDDTAFIATSFPDFVPMMQRLGAEFG.

3-phosphoshikimate is bound by residues lysine 28, serine 29, and arginine 33. Lysine 28 lines the phosphoenolpyruvate pocket. Glycine 101 and arginine 129 together coordinate phosphoenolpyruvate. 4 residues coordinate 3-phosphoshikimate: serine 175, glutamine 177, aspartate 328, and lysine 355. Residue glutamine 177 coordinates phosphoenolpyruvate. The active-site Proton acceptor is aspartate 328. Phosphoenolpyruvate-binding residues include arginine 359 and arginine 402.

The protein belongs to the EPSP synthase family. Monomer.

The protein localises to the cytoplasm. It catalyses the reaction 3-phosphoshikimate + phosphoenolpyruvate = 5-O-(1-carboxyvinyl)-3-phosphoshikimate + phosphate. It participates in metabolic intermediate biosynthesis; chorismate biosynthesis; chorismate from D-erythrose 4-phosphate and phosphoenolpyruvate: step 6/7. Functionally, catalyzes the transfer of the enolpyruvyl moiety of phosphoenolpyruvate (PEP) to the 5-hydroxyl of shikimate-3-phosphate (S3P) to produce enolpyruvyl shikimate-3-phosphate and inorganic phosphate. The chain is 3-phosphoshikimate 1-carboxyvinyltransferase from Rhodopseudomonas palustris (strain HaA2).